Consider the following 295-residue polypeptide: Glutamate-binding protein GluB (295 aa).

Positions 1–26 (MSAKRTFTRIGAILGATALAGVTLTA) are cleaved as a signal peptide. A lipid anchor (N-palmitoyl cysteine) is attached at Cys27. Cys27 is lipidated: S-diacylglycerol cysteine.

The protein belongs to the bacterial solute-binding protein 3 family. The complex is composed of two ATP-binding proteins (GluA), two transmembrane proteins (GluC and GluD) and a solute-binding protein (GluB).

It is found in the cell membrane. With respect to regulation, binding of glutamate or asparatate induces a higher thermal stability of the protein structure. Its function is as follows. Part of the ABC transporter complex GluABCD involved in glutamate uptake. Binds glutamate with a high affinity. Also binds aspartate with high affinity, suggesting that GluB could be involved in the transport of both amino acid residues into the cell. In Corynebacterium glutamicum (strain ATCC 13032 / DSM 20300 / JCM 1318 / BCRC 11384 / CCUG 27702 / LMG 3730 / NBRC 12168 / NCIMB 10025 / NRRL B-2784 / 534), this protein is Glutamate-binding protein GluB.